A 699-amino-acid polypeptide reads, in one-letter code: MNPIVKSFEYGQHTVTLETGVIARQADAAVLASMGDTTVLVTVVGKKEAEAGRDFFPLTVNYQEKTYAAGKIPGGFFKREGRPSEDETLIARLIDRPIRPLFPNGFTNEVQVIITVVSVDPQIEPDIISMIGTSAALAISGIPFSGPLGAARVGYINGEYVLNPTVTQLANSQLNLVVAGTEGAVLMVESEAQALPEEVMLGSVVYGHDQQQVVIKAIAEFKAEAGKPAWNWTAPVANEALVAQVKELAEAGLAQAYQIQVKQERYAQVAVVKAAAKEALLAANPEVDLREVDGLLGSLEKKVVRGRIIRGEPRIDGREPDMVRALSVLAGVLPRTHGSALFTRGETQALVTCTLGTERDAQKIDSIMGERTNRFMLHYNFPPYSVGETGMVGSPKRREIGHGKLAWRGINAVMPTAEEFPYSVRVVSEITESNGSSSMASVCGTSLALMDAGVPIKTSVAGIAMGLVKEGDNFVVLSDILGDEDHLGDMDFKVAGTRDGVTALQMDIKIEGITKEIMEIALQQAYGARVHILNVMDQAIGSHRDDISDHAPRITTIKINPEKIRDVIGKGGAVIRALTEETGTTIELEDDGTVKIASSNGEATKEAIRRIEEITSEVEVGRIYNGKVIRIVDFGAFVNILPGKDGLVHISQISDERVANVSDHLELNQEVTVKVMEVDRQGRVRLSIKEAQTKEAAAE.

Asp-485 and Asp-491 together coordinate Mg(2+). The KH domain occupies 552–611; sequence PRITTIKINPEKIRDVIGKGGAVIRALTEETGTTIELEDDGTVKIASSNGEATKEAIRRI. Residues 621 to 689 enclose the S1 motif domain; that stretch reads GRIYNGKVIR…RQGRVRLSIK (69 aa).

The protein belongs to the polyribonucleotide nucleotidyltransferase family. As to quaternary structure, component of the RNA degradosome, which is a multiprotein complex involved in RNA processing and mRNA degradation. Mg(2+) is required as a cofactor.

It localises to the cytoplasm. It catalyses the reaction RNA(n+1) + phosphate = RNA(n) + a ribonucleoside 5'-diphosphate. Its function is as follows. Involved in mRNA degradation. Catalyzes the phosphorolysis of single-stranded polyribonucleotides processively in the 3'- to 5'-direction. This Shewanella sp. (strain MR-7) protein is Polyribonucleotide nucleotidyltransferase.